The primary structure comprises 341 residues: Paired box protein Pax-9 (341 aa).

The segment at residues 4-130 is a DNA-binding region (paired); it reads AFGEVNQLGG…SSISRILRNK (127 aa). Residues 7 to 63 are PAI subdomain; it reads EVNQLGGVFVNGRPLPNAIRLRIVELAQLGIRPCDISRQLRVSHGCVSKILARYNET. Residues 82-130 are RED subdomain; the sequence is TVVKHIRTYKQRDPGIFAWEIRDRLLADGVCDKYNVPSVSSISRILRNK. The tract at residues 168 to 189 is interaction with KDM5B; it reads AAAAKVPTPPGVPAIPGSVAMP.

Interacts with KDM5B.

It localises to the nucleus. Functionally, transcription factor required for normal development of thymus, parathyroid glands, ultimobranchial bodies, teeth, skeletal elements of skull and larynx as well as distal limbs. The polypeptide is Paired box protein Pax-9 (PAX9) (Leontopithecus rosalia (Golden lion tamarin)).